A 201-amino-acid chain; its full sequence is Sterile alpha motif domain-containing protein 12 (201 aa).

One can recognise an SAM domain in the interval 77 to 143; the sequence is WTQQDVCKWL…LQQVLQLKVR (67 aa).

This is Sterile alpha motif domain-containing protein 12 (SAMD12) from Pongo abelii (Sumatran orangutan).